Here is a 1070-residue protein sequence, read N- to C-terminus: RecBCD enzyme subunit RecC (1070 aa).

Belongs to the RecC family. As to quaternary structure, heterotrimer of RecB, RecC and RecD. All subunits contribute to DNA-binding.

A helicase/nuclease that prepares dsDNA breaks (DSB) for recombinational DNA repair. Binds to DSBs and unwinds DNA via a highly rapid and processive ATP-dependent bidirectional helicase activity. Unwinds dsDNA until it encounters a Chi (crossover hotspot instigator) sequence from the 3' direction. Cuts ssDNA a few nucleotides 3' to the Chi site. The properties and activities of the enzyme are changed at Chi. The Chi-altered holoenzyme produces a long 3'-ssDNA overhang and facilitates RecA-binding to the ssDNA for homologous DNA recombination and repair. Holoenzyme degrades any linearized DNA that is unable to undergo homologous recombination. In the holoenzyme this subunit recognizes the wild-type Chi sequence, and when added to isolated RecB increases its ATP-dependent helicase processivity. The protein is RecBCD enzyme subunit RecC of Buchnera aphidicola subsp. Acyrthosiphon pisum (strain APS) (Acyrthosiphon pisum symbiotic bacterium).